We begin with the raw amino-acid sequence, 394 residues long: Cysteine protease ATG4B (394 aa).

Cys74 acts as the Nucleophile in catalysis. Catalysis depends on residues Asp280 and His282. Positions 389 to 392 (FEIL) match the LIR motif.

Belongs to the peptidase C54 family.

The protein resides in the cytoplasm. It is found in the cytosol. Its subcellular location is the cytoplasmic vesicle. It localises to the autophagosome. The protein localises to the endoplasmic reticulum. The protein resides in the mitochondrion. It catalyses the reaction [protein]-C-terminal L-amino acid-glycyl-phosphatidylethanolamide + H2O = [protein]-C-terminal L-amino acid-glycine + a 1,2-diacyl-sn-glycero-3-phosphoethanolamine. The catalysed reaction is [protein]-C-terminal L-amino acid-glycyl-phosphatidylserine + H2O = [protein]-C-terminal L-amino acid-glycine + a 1,2-diacyl-sn-glycero-3-phospho-L-serine. Cysteine protease that plays a key role in autophagy by mediating both proteolytic activation and delipidation of ATG8 family proteins. Required for canonical autophagy (macroautophagy), non-canonical autophagy as well as for mitophagy. The protease activity is required for proteolytic activation of ATG8 family proteins: cleaves the C-terminal amino acid of ATG8 proteins to reveal a C-terminal glycine. Exposure of the glycine at the C-terminus is essential for ATG8 proteins conjugation to phosphatidylethanolamine (PE) and insertion to membranes, which is necessary for autophagy. Protease activity is also required to counteract formation of high-molecular weight conjugates of ATG8 proteins (ATG8ylation): acts as a deubiquitinating-like enzyme that removes ATG8 conjugated to other proteins, such as ATG3. In addition to the protease activity, also mediates delipidation of ATG8 family proteins. Catalyzes delipidation of PE-conjugated forms of ATG8 proteins during macroautophagy. Also involved in non-canonical autophagy, a parallel pathway involving conjugation of ATG8 proteins to single membranes at endolysosomal compartments, by catalyzing delipidation of ATG8 proteins conjugated to phosphatidylserine (PS). In Danio rerio (Zebrafish), this protein is Cysteine protease ATG4B.